Consider the following 127-residue polypeptide: Apolipoprotein C-IV (127 aa).

An N-terminal signal peptide occupies residues 1–27 (MSLLRNRLQDLPALCLCVLVLACIGAC).

The protein belongs to the apolipoprotein C4 family.

Its subcellular location is the secreted. Functionally, may participate in lipoprotein metabolism. The chain is Apolipoprotein C-IV (APOC4) from Chlorocebus sabaeus (Green monkey).